Reading from the N-terminus, the 39-residue chain is Photosystem II reaction center protein J (39 aa).

Residues 7–27 (IPLWIVATVAGTGALVVVGLF) form a helical membrane-spanning segment.

Belongs to the PsbJ family. As to quaternary structure, PSII is composed of 1 copy each of membrane proteins PsbA, PsbB, PsbC, PsbD, PsbE, PsbF, PsbH, PsbI, PsbJ, PsbK, PsbL, PsbM, PsbT, PsbX, PsbY, PsbZ, Psb30/Ycf12, peripheral proteins PsbO, CyanoQ (PsbQ), PsbU, PsbV and a large number of cofactors. It forms dimeric complexes.

It is found in the cellular thylakoid membrane. Its function is as follows. One of the components of the core complex of photosystem II (PSII). PSII is a light-driven water:plastoquinone oxidoreductase that uses light energy to abstract electrons from H(2)O, generating O(2) and a proton gradient subsequently used for ATP formation. It consists of a core antenna complex that captures photons, and an electron transfer chain that converts photonic excitation into a charge separation. This is Photosystem II reaction center protein J from Synechococcus sp. (strain ATCC 27144 / PCC 6301 / SAUG 1402/1) (Anacystis nidulans).